The following is a 263-amino-acid chain: GTP cyclohydrolase 1 type 2 homolog (263 aa).

Residues H65, H66, D104, H225, and E229 each contribute to the a divalent metal cation site.

This sequence belongs to the GTP cyclohydrolase I type 2/NIF3 family. As to quaternary structure, homohexamer.

This Nostoc sp. (strain PCC 7120 / SAG 25.82 / UTEX 2576) protein is GTP cyclohydrolase 1 type 2 homolog.